The sequence spans 805 residues: MSKLTTGSFSIEDLESVQITINNIVGAAKEAAEEKAKELGPMGPTAMAGLASYRSWNLLLLDRYEPVLTPMCDQCCYCTYGPCDLSGNKRGACGIDMAGQTGREFFLRVITGTACHAAHGRHLLDHVIEVFGEDLPLNLGESNVLTPNVTICTGLSPKTLGECRAPMEYVEEQLTQLLATIHAGQESAEIDYDSKALFSGSLDHVGMEVSDIAQVSAYDFPKADPEAPLIEIGMGSIDKSKPLIVAIGHNVAGVTYIMDYMEENNLTDKMEIAGLCCTAFDMTRYKEADRRAPYAKIVGSLAKELKVIRSGMPDVIVVDEQCVRGDVLSESQKLKIPVIASNEKIMMGLPDRTDADVDSIVEEIKSGAIPGCVMLDYDKLGELIPKIAEVMAPIRDAEGITAIPTDEEFKVYIDKCVKCGECMLACPEELDIPEALEYAAKGSYEYLEALHDVCIGCRRCEQVCKKEIPILNVLEKAAQKSISEEKGWVRSGRGQASDAEIRKEGLNLVMGTTPGIIAIIGCPNYPAGTKDVYLIAEEFLKRNYLLAVSGCSAMDIGMFKDEDGKTLYEKYPGTFAGGGLLNTGSCVSNAHISGAAEKVAGIFAQRTLAGNLAEIADYTLNRVGACGLAWGAYSQKAASIGTGCNIYGIPAVLGPHSSKYRRALIAKNYDESKWKVYDGRDGSEMTIPPAPEFLLTTAETWQEAIPMMAKACIRPSDNNMGRSIKLTHWMELSKKYLGVEPEDWWKFVRNEADLPLAKREELLKRLEAEHGWEIDWKRKKIISGPKIKFDVSAQPTNLKRLCKEA.

Positions 72, 75, 76, 78, 83, and 93 each coordinate [4Fe-4S] cluster. His-116 contributes to the CO binding site. His-249, Cys-277, and Cys-322 together coordinate [Ni-4Fe-4S] cluster. 2 consecutive 4Fe-4S ferredoxin-type domains span residues Glu-407 to Ala-435 and Glu-445 to Leu-474. [4Fe-4S] cluster is bound by residues Cys-416, Cys-419, Cys-422, Cys-426, Cys-454, Cys-457, Cys-460, and Cys-464. Positions 522, 551, and 586 each coordinate [Ni-4Fe-4S] cluster.

It belongs to the Ni-containing carbon monoxide dehydrogenase family. Heterotetramer of two alpha and two epsilon subunits. The ACDS complex is made up of alpha, epsilon, beta, gamma and delta subunits with a probable stoichiometry of (alpha(2)epsilon(2))(4)-beta(8)-(gamma(1)delta(1))(8). [4Fe-4S] cluster is required as a cofactor. Requires [Ni-4Fe-4S] cluster as cofactor.

It catalyses the reaction CO + 2 oxidized [2Fe-2S]-[ferredoxin] + H2O = 2 reduced [2Fe-2S]-[ferredoxin] + CO2 + 2 H(+). It functions in the pathway one-carbon metabolism; methanogenesis from acetate. Part of the ACDS complex that catalyzes the reversible cleavage of acetyl-CoA, allowing growth on acetate as sole source of carbon and energy. The alpha-epsilon subcomponent functions as a carbon monoxide dehydrogenase. In Methanosarcina acetivorans (strain ATCC 35395 / DSM 2834 / JCM 12185 / C2A), this protein is Acetyl-CoA decarbonylase/synthase complex subunit alpha 2.